Consider the following 994-residue polypeptide: Translation initiation factor IF-2 (994 aa).

2 stretches are compositionally biased toward polar residues: residues 1 to 10 (MSDENNNGRN) and 28 to 40 (SVSS…SFSH). The tract at residues 1 to 405 (MSDENNNGRN…REKRKGGAQE (405 aa)) is disordered. The segment covering 76–91 (PQKPAGPAQAPRAPQG) has biased composition (low complexity). Positions 98–131 (AEERAARQRAIELARQQEADRRAREERARAEAEA) are enriched in basic and acidic residues. Residues 132–146 (ARAAQQKAAQAAAEP) show a composition bias toward low complexity. Residues 147–157 (PAAPPPAPAAP) are compositionally biased toward pro residues. Residues 158 to 172 (PAAAAPAAPAAEAAP) show a composition bias toward low complexity. Positions 173–188 (APKPAPSPRPVPPSAP) are enriched in pro residues. Residues 189 to 204 (APQAARPAAEAPPRQA) show a composition bias toward low complexity. 2 stretches are compositionally biased toward basic and acidic residues: residues 216 to 235 (PDRR…RPSN) and 247 to 273 (PRRD…DRPQ). The span at 298 to 310 (RGPGGPRGPGGPR) shows a compositional bias: gly residues. Composition is skewed to basic and acidic residues over residues 336–350 (VDRR…RDPG) and 390–402 (RARE…RKGG). One can recognise a tr-type G domain in the interval 492–662 (PRPPVVAVMG…LLQAEVLDLK (171 aa)). Residues 501 to 508 (GHVDHGKT) form a G1 region. Residue 501–508 (GHVDHGKT) participates in GTP binding. The tract at residues 526–530 (GITQH) is G2. A G3 region spans residues 548-551 (DTPG). GTP-binding positions include 548–552 (DTPGH) and 602–605 (NKID). The interval 602–605 (NKID) is G4. Residues 638 to 640 (SAT) are G5.

It belongs to the TRAFAC class translation factor GTPase superfamily. Classic translation factor GTPase family. IF-2 subfamily.

Its subcellular location is the cytoplasm. Its function is as follows. One of the essential components for the initiation of protein synthesis. Protects formylmethionyl-tRNA from spontaneous hydrolysis and promotes its binding to the 30S ribosomal subunits. Also involved in the hydrolysis of GTP during the formation of the 70S ribosomal complex. This is Translation initiation factor IF-2 from Phenylobacterium zucineum (strain HLK1).